Here is a 333-residue protein sequence, read N- to C-terminus: Phosphate acyltransferase (333 aa).

This sequence belongs to the PlsX family. In terms of assembly, homodimer. Probably interacts with PlsY.

It is found in the cytoplasm. The enzyme catalyses a fatty acyl-[ACP] + phosphate = an acyl phosphate + holo-[ACP]. The protein operates within lipid metabolism; phospholipid metabolism. Its function is as follows. Catalyzes the reversible formation of acyl-phosphate (acyl-PO(4)) from acyl-[acyl-carrier-protein] (acyl-ACP). This enzyme utilizes acyl-ACP as fatty acyl donor, but not acyl-CoA. This is Phosphate acyltransferase from Bacillus subtilis (strain 168).